We begin with the raw amino-acid sequence, 836 residues long: MGMQSGWPFFCLLISLTIGSDPHWVTVYYGVPVWRDAETVLFCASDAKAHSTEAHNIWATQACVPTDPNPQEVLLTNVTEYFNMWENKMAEQMQEDIISLWEQSLKPCVKLTPLCVTMLCNNSNGNSAGNSTTNRTEDLEDRQMKNCSFNITTEIRDRKKQVYSLFYVEDVVPIKDGTDNNTYRLINCNTTAVTQACPKTTFEPIPIHYCAPPGFAIMKCNEGNFSGNGSCTNVSTVQCTHGIKPVISTQLILNGSLDTDDIVIRHHGGNLLVQWNETVSINCTRPGNNTGGQVQIGPAMTFYNIEKIVGDVRQAYCNVSEEWGSMWNKTKKKIKRLLGNNTTFKAQDKNGGDLEVTHLMFNCXGEFFYCNTSRLFNESENKTNKTIILPCRIKQIVBLWTRVXKGIYAPPIRGNLSCXSSITGLILEHSGENGNKTVYPSGGNMVNLWRQELYKYKVVSIEPIGVAPGKAKRRTVSREKRAAFGLGALFLGFLGAAGSTMGAASITLTVQARTLLSGIVQQQNNLLRAIEAQQHLLQLSIWGIKQLRAKVLAIERYLRDQQILSLWGCSGKTICYTTVPWNDTWSSNTSYDTIWXNLTWQQWDRKVRNYSGVIFDLIEQAQEQQNTNEKALLELDQWASLWNWFDITKWLWYIKIAIMVVAGIIGIRIISAIITIIARVRQGYSPLSLQTLIPTAARGPDRPEETEEGVGGQDRGRSVRLVSGFLALIWEDLRNLLIFLYHRLADSLLIIRRTLEILGQSLSRGLQLLNELRIRLWGIIAYWGKELKDSAISLLNTTAIVVAEGTDRFIELAQRIGRGILHIPRRIRQGLERALL.

The signal sequence occupies residues 1-21 (MGMQSGWPFFCLLISLTIGSD). The Extracellular portion of the chain corresponds to 22–656 (PHWVTVYYGV…ITKWLWYIKI (635 aa)). Cys43 and Cys63 are disulfide-bonded. Residues Asn77, Asn121, Asn130, Asn134, Asn146, Asn150, Asn180, Asn189, Asn224, Asn228, Asn233, Asn254, Asn276, Asn282, Asn288, Asn318, Asn328, Asn340, and Asn341 are each glycosylated (N-linked (GlcNAc...) asparagine; by host). Cystine bridges form between Cys108/Cys197, Cys115/Cys188, Cys120/Cys147, Cys210/Cys239, and Cys220/Cys231. The V1 stretch occupies residues 120–146 (CNNSNGNSAGNSTTNRTEDLEDRQMKN). The V2 stretch occupies residues 147–188 (CSFNITTEIRDRKKQVYSLFYVEDVVPIKDGTDNNTYRLINC). A V3 region spans residues 283-316 (CTRPGNNTGGQVQIGPAMTFYNIEKIVGDVRQAY). Cys283 and Cys317 are disulfide-bonded. The interval 349 to 359 (KNGGDLEVTHL) is CD4-binding loop. Cystine bridges form between Cys363/Cys418 and Cys370/Cys391. The V4 stretch occupies residues 370–391 (CNTSRLFNESENKTNKTIILPC). Asn371, Asn377, Asn381, Asn384, Asn415, and Asn435 each carry an N-linked (GlcNAc...) asparagine; by host glycan. The tract at residues 434–441 (GNKTVYPS) is V5. The segment at 482-503 (AAFGLGALFLGFLGAAGSTMGA) is fusion peptide. Positions 545–563 (KQLRAKVLAIERYLRDQQI) are immunosuppression. A disulfide bond links Cys569 and Cys575. N-linked (GlcNAc...) asparagine; by host glycans are attached at residues Asn582, Asn588, Asn597, and Asn609. Positions 605-639 (RKVRNYSGVIFDLIEQAQEQQNTNEKALLELDQWA) form a coiled coil. The interval 634 to 655 (ELDQWASLWNWFDITKWLWYIK) is MPER; binding to GalCer. The helical transmembrane segment at 657–677 (AIMVVAGIIGIRIISAIITII) threads the bilayer. At 678 to 836 (ARVRQGYSPL…IRQGLERALL (159 aa)) the chain is on the cytoplasmic side. A YXXL motif; contains endocytosis signal motif is present at residues 684 to 687 (YSPL). The segment at 696-715 (AARGPDRPEETEEGVGGQDR) is disordered. The Di-leucine internalization motif motif lies at 835 to 836 (LL).

This sequence belongs to the HIV-1 env protein family. The mature envelope protein (Env) consists of a homotrimer of non-covalently associated gp120-gp41 heterodimers. The resulting complex protrudes from the virus surface as a spike. There seems to be as few as 10 spikes on the average virion. Interacts with host CD4, CCR5 and CXCR4. Gp120 also interacts with the C-type lectins CD209/DC-SIGN and CLEC4M/DC-SIGNR (collectively referred to as DC-SIGN(R)). Gp120 and gp41 interact with GalCer. Gp120 interacts with host ITGA4/ITGB7 complex; on CD4+ T-cells, this interaction results in rapid activation of integrin ITGAL/LFA-1, which facilitates efficient cell-to-cell spreading of HIV-1. Gp120 interacts with cell-associated heparan sulfate; this interaction increases virus infectivity on permissive cells and may be involved in infection of CD4- cells. In terms of assembly, the mature envelope protein (Env) consists of a homotrimer of non-covalently associated gp120-gp41 heterodimers. The resulting complex protrudes from the virus surface as a spike. There seems to be as few as 10 spikes on the average virion. Highly glycosylated by host. The high number of glycan on the protein is reffered to as 'glycan shield' because it contributes to hide protein sequence from adaptive immune system. Post-translationally, palmitoylation of the transmembrane protein and of Env polyprotein (prior to its proteolytic cleavage) is essential for their association with host cell membrane lipid rafts. Palmitoylation is therefore required for envelope trafficking to classical lipid rafts, but not for viral replication. In terms of processing, specific enzymatic cleavages in vivo yield mature proteins. Envelope glycoproteins are synthesized as an inactive precursor that is heavily N-glycosylated and processed likely by host cell furin in the Golgi to yield the mature SU and TM proteins. The cleavage site between SU and TM requires the minimal sequence [KR]-X-[KR]-R. About 2 of the 9 disulfide bonds of gp41 are reduced by P4HB/PDI, following binding to CD4 receptor.

It localises to the virion membrane. The protein localises to the host cell membrane. The protein resides in the host endosome membrane. Functionally, oligomerizes in the host endoplasmic reticulum into predominantly trimers. In a second time, gp160 transits in the host Golgi, where glycosylation is completed. The precursor is then proteolytically cleaved in the trans-Golgi and thereby activated by cellular furin or furin-like proteases to produce gp120 and gp41. In terms of biological role, attaches the virus to the host lymphoid cell by binding to the primary receptor CD4. This interaction induces a structural rearrangement creating a high affinity binding site for a chemokine coreceptor like CXCR4 and/or CCR5. Acts as a ligand for CD209/DC-SIGN and CLEC4M/DC-SIGNR, which are respectively found on dendritic cells (DCs), and on endothelial cells of liver sinusoids and lymph node sinuses. These interactions allow capture of viral particles at mucosal surfaces by these cells and subsequent transmission to permissive cells. HIV subverts the migration properties of dendritic cells to gain access to CD4+ T-cells in lymph nodes. Virus transmission to permissive T-cells occurs either in trans (without DCs infection, through viral capture and transmission), or in cis (following DCs productive infection, through the usual CD4-gp120 interaction), thereby inducing a robust infection. In trans infection, bound virions remain infectious over days and it is proposed that they are not degraded, but protected in non-lysosomal acidic organelles within the DCs close to the cell membrane thus contributing to the viral infectious potential during DCs' migration from the periphery to the lymphoid tissues. On arrival at lymphoid tissues, intact virions recycle back to DCs' cell surface allowing virus transmission to CD4+ T-cells. Acts as a class I viral fusion protein. Under the current model, the protein has at least 3 conformational states: pre-fusion native state, pre-hairpin intermediate state, and post-fusion hairpin state. During fusion of viral and target intracellular membranes, the coiled coil regions (heptad repeats) assume a trimer-of-hairpins structure, positioning the fusion peptide in close proximity to the C-terminal region of the ectodomain. The formation of this structure appears to drive apposition and subsequent fusion of viral and target cell membranes. Complete fusion occurs in host cell endosomes and is dynamin-dependent, however some lipid transfer might occur at the plasma membrane. The virus undergoes clathrin-dependent internalization long before endosomal fusion, thus minimizing the surface exposure of conserved viral epitopes during fusion and reducing the efficacy of inhibitors targeting these epitopes. Membranes fusion leads to delivery of the nucleocapsid into the cytoplasm. In Human immunodeficiency virus type 1 group N (isolate YBF106) (HIV-1), this protein is Envelope glycoprotein gp160.